A 413-amino-acid chain; its full sequence is Cis,cis-muconate transport protein (413 aa).

The Cytoplasmic segment spans residues 1-16; sequence MYSNNQRSRIGSHTWK. Residues 17–37 form a helical membrane-spanning segment; sequence IAFLFAFLALLVDGADLMLLS. At 38–53 the chain is on the periplasmic side; it reads YSLNSIKAEFNLSTVE. Residues 54–74 form a helical membrane-spanning segment; the sequence is AGMLGSFTLAGMAIGGIFGGW. The Cytoplasmic portion of the chain corresponds to 75-85; that stretch reads ACDRFGRVRIV. The helical transmembrane segment at 86 to 106 threads the bilayer; it reads VISILTFSILTCGLGLTQSFI. Topologically, residues 107–112 are periplasmic; the sequence is QFGVLR. Residues 113–133 traverse the membrane as a helical segment; that stretch reads FFASLGLGSLYIACNTLMAEY. The Cytoplasmic portion of the chain corresponds to 134-145; the sequence is VPTKYRTTVLGT. A helical membrane pass occupies residues 146–166; that stretch reads LQAGWTVGYIVATLLAGWLIP. Residues 167-171 are Periplasmic-facing; it reads DHGWR. The helical transmembrane segment at 172-192 threads the bilayer; that stretch reads VLFYVAIIPVLMAVLMHFFVP. Topologically, residues 193–228 are cytoplasmic; that stretch reads EPAAWQQSRLAPSKQTETVKTSAFKLIFQDKRNRNM. The helical transmembrane segment at 229–249 threads the bilayer; the sequence is FILWALTAGFLQFGYYGVNNW. At 250-266 the chain is on the periplasmic side; the sequence is MPSYLESELGMKFKEMT. The chain crosses the membrane as a helical span at residues 267–287; the sequence is AYMVGTYTAMILGKILAGFMA. Topologically, residues 288–293 are cytoplasmic; it reads DKLGRR. A helical membrane pass occupies residues 294–314; the sequence is FTYAFGAIGTAIFLPLIVFYN. Residues 315–318 are Periplasmic-facing; it reads SPDN. A helical transmembrane segment spans residues 319–339; sequence ILYLLVIFGFLYGIPYGVNAT. At 340–352 the chain is on the cytoplasmic side; the sequence is YMTESFPTAIRGT. The helical transmembrane segment at 353 to 376 threads the bilayer; that stretch reads AIGGAYNVGRLGAAIAPATIGFLA. At 377–382 the chain is on the periplasmic side; it reads SGGSIG. Residues 383 to 403 traverse the membrane as a helical segment; sequence LGFVVMGAAYFICGVIPALFI. Topologically, residues 404–413 are cytoplasmic; that stretch reads KEKQYDPQQS.

The protein belongs to the major facilitator superfamily. Aromatic acid:H(+) symporter (AAHS) (TC 2.A.1.15) family.

It localises to the cell inner membrane. Functionally, probable uptake of muconate. The polypeptide is Cis,cis-muconate transport protein (mucK) (Acinetobacter baylyi (strain ATCC 33305 / BD413 / ADP1)).